Reading from the N-terminus, the 193-residue chain is Probable DNA-directed RNA polymerase subunit delta (193 aa).

Residues 14-83 (LSMIEVARAI…GENKWGLRSW (70 aa)) enclose the HTH HARE-type domain. Acidic residues-rich tracts occupy residues 117-134 (GDDDAIDYGHDDPEDEDN) and 142-193 (EYDD…VVDE). Residues 117 to 193 (GDDDAIDYGH…EYSDEEVVDE (77 aa)) form a disordered region.

This sequence belongs to the RpoE family. RNAP is composed of a core of 2 alpha, a beta and a beta' subunits. The core is associated with a delta subunit and one of several sigma factors.

Its function is as follows. Participates in both the initiation and recycling phases of transcription. In the presence of the delta subunit, RNAP displays an increased specificity of transcription, a decreased affinity for nucleic acids, and an increased efficiency of RNA synthesis because of enhanced recycling. The sequence is that of Probable DNA-directed RNA polymerase subunit delta from Streptococcus suis (strain 05ZYH33).